Here is a 173-residue protein sequence, read N- to C-terminus: ATP synthase subunit delta (173 aa).

It belongs to the ATPase delta chain family. In terms of assembly, F-type ATPases have 2 components, F(1) - the catalytic core - and F(0) - the membrane proton channel. F(1) has five subunits: alpha(3), beta(3), gamma(1), delta(1), epsilon(1). F(0) has three main subunits: a(1), b(2) and c(10-14). The alpha and beta chains form an alternating ring which encloses part of the gamma chain. F(1) is attached to F(0) by a central stalk formed by the gamma and epsilon chains, while a peripheral stalk is formed by the delta and b chains.

The protein localises to the cell inner membrane. Its function is as follows. F(1)F(0) ATP synthase produces ATP from ADP in the presence of a proton or sodium gradient. F-type ATPases consist of two structural domains, F(1) containing the extramembraneous catalytic core and F(0) containing the membrane proton channel, linked together by a central stalk and a peripheral stalk. During catalysis, ATP synthesis in the catalytic domain of F(1) is coupled via a rotary mechanism of the central stalk subunits to proton translocation. This protein is part of the stalk that links CF(0) to CF(1). It either transmits conformational changes from CF(0) to CF(1) or is implicated in proton conduction. The sequence is that of ATP synthase subunit delta from Campylobacter jejuni subsp. jejuni serotype O:6 (strain 81116 / NCTC 11828).